Here is a 161-residue protein sequence, read N- to C-terminus: Nucleotide-binding protein H16_A3060 (161 aa).

This sequence belongs to the YajQ family.

Functionally, nucleotide-binding protein. This is Nucleotide-binding protein H16_A3060 from Cupriavidus necator (strain ATCC 17699 / DSM 428 / KCTC 22496 / NCIMB 10442 / H16 / Stanier 337) (Ralstonia eutropha).